Reading from the N-terminus, the 357-residue chain is Tetraacyldisaccharide 4'-kinase (357 aa).

Residue 49 to 56 (TIGGTGKT) coordinates ATP.

Belongs to the LpxK family.

The enzyme catalyses a lipid A disaccharide + ATP = a lipid IVA + ADP + H(+). The protein operates within glycolipid biosynthesis; lipid IV(A) biosynthesis; lipid IV(A) from (3R)-3-hydroxytetradecanoyl-[acyl-carrier-protein] and UDP-N-acetyl-alpha-D-glucosamine: step 6/6. In terms of biological role, transfers the gamma-phosphate of ATP to the 4'-position of a tetraacyldisaccharide 1-phosphate intermediate (termed DS-1-P) to form tetraacyldisaccharide 1,4'-bis-phosphate (lipid IVA). The protein is Tetraacyldisaccharide 4'-kinase of Porphyromonas gingivalis (strain ATCC 33277 / DSM 20709 / CIP 103683 / JCM 12257 / NCTC 11834 / 2561).